The primary structure comprises 115 residues: Large ribosomal subunit protein uL18 (115 aa).

Belongs to the universal ribosomal protein uL18 family. Part of the 50S ribosomal subunit; part of the 5S rRNA/L5/L18/L25 subcomplex. Contacts the 5S and 23S rRNAs.

In terms of biological role, this is one of the proteins that bind and probably mediate the attachment of the 5S RNA into the large ribosomal subunit, where it forms part of the central protuberance. This chain is Large ribosomal subunit protein uL18, found in Mycoplasma genitalium (strain ATCC 33530 / DSM 19775 / NCTC 10195 / G37) (Mycoplasmoides genitalium).